The sequence spans 290 residues: 33 kDa chaperonin (290 aa).

2 disulfides stabilise this stretch: cysteine 235–cysteine 237 and cysteine 268–cysteine 271.

This sequence belongs to the HSP33 family. In terms of processing, under oxidizing conditions two disulfide bonds are formed involving the reactive cysteines. Under reducing conditions zinc is bound to the reactive cysteines and the protein is inactive.

The protein resides in the cytoplasm. Functionally, redox regulated molecular chaperone. Protects both thermally unfolding and oxidatively damaged proteins from irreversible aggregation. Plays an important role in the bacterial defense system toward oxidative stress. The polypeptide is 33 kDa chaperonin (Streptococcus equi subsp. zooepidemicus (strain MGCS10565)).